The sequence spans 240 residues: MSINDDISSDVMRIRDADWNKRSGSKVPSPGDVTLSNGAVEIDATYLYADMANSSRMAKELDRRVTAKILKSFLASSSRLISHFGGTIMSFDGDRVMGAFMGDAKNSSAIKCSFSIAYSVTQLIRPKFESKYDTVKNAGFKIRHATGVDTGTVFVVRGGIYGSNELISIGRAPNLAAKLSDLREGEYTTFATKSVYDRTNKLQKQRLDGSSDIWEKRDWDFCDENITIYRSSYWRKPGSN.

Positions 45–180 (TYLYADMANS…RAPNLAAKLS (136 aa)) constitute a Guanylate cyclase domain. Tyrosine 48 is a binding site for a ribonucleoside 5'-triphosphate. The Mn(2+) site is built by aspartate 50 and aspartate 94. Arginine 95 lines the a ribonucleoside 5'-triphosphate pocket.

It belongs to the adenylyl cyclase class-4/guanylyl cyclase family. Pyrimidine cyclase subfamily. In terms of assembly, homodimer. Mn(2+) is required as a cofactor.

The protein localises to the cytoplasm. It catalyses the reaction UTP = 3',5'-cyclic UMP + diphosphate. Functionally, pycsar (pyrimidine cyclase system for antiphage resistance) provides immunity against bacteriophage. The pyrimidine cyclase (PycC) synthesizes cyclic nucleotides in response to infection; these serve as specific second messenger signals. The signals activate the adjacent effector, leading to bacterial cell death and abortive phage infection. A clade B Pycsar system. The pyrimidine cyclase gene of a two-gene Pycsar system, weakly generates cyclic UMP (cUMP) from UTP, has little to no activity on ATP, CTP or GTP. Expression of this and adjacent effector RsmPycTM (AC A0A1V0HUU2) probably confers resistance to bacteriophage. The genes are probably only expressed in response to bacteriophage infection. The polypeptide is Uridylate cyclase (Rhodovulum sp. (strain MB263)).